The chain runs to 110 residues: Cytochrome c (110 aa).

Heme c contacts are provided by cysteine 21, cysteine 24, histidine 25, and methionine 87.

It belongs to the cytochrome c family. Post-translationally, binds 1 heme c group covalently per subunit.

It localises to the mitochondrion intermembrane space. Its function is as follows. Electron carrier protein. The oxidized form of the cytochrome c heme group can accept an electron from the heme group of the cytochrome c1 subunit of cytochrome reductase. Cytochrome c then transfers this electron to the cytochrome oxidase complex, the final protein carrier in the mitochondrial electron-transport chain. The chain is Cytochrome c (CYCK) from Kluyveromyces lactis (strain ATCC 8585 / CBS 2359 / DSM 70799 / NBRC 1267 / NRRL Y-1140 / WM37) (Yeast).